The sequence spans 634 residues: 1-deoxy-D-xylulose-5-phosphate synthase (634 aa).

Thiamine diphosphate is bound by residues H74 and 115–117 (AHS). D146 contributes to the Mg(2+) binding site. Thiamine diphosphate contacts are provided by residues 147–148 (GA), N176, Y283, and E365. Mg(2+) is bound at residue N176.

It belongs to the transketolase family. DXPS subfamily. In terms of assembly, homodimer. Mg(2+) serves as cofactor. It depends on thiamine diphosphate as a cofactor.

It catalyses the reaction D-glyceraldehyde 3-phosphate + pyruvate + H(+) = 1-deoxy-D-xylulose 5-phosphate + CO2. It participates in metabolic intermediate biosynthesis; 1-deoxy-D-xylulose 5-phosphate biosynthesis; 1-deoxy-D-xylulose 5-phosphate from D-glyceraldehyde 3-phosphate and pyruvate: step 1/1. Catalyzes the acyloin condensation reaction between C atoms 2 and 3 of pyruvate and glyceraldehyde 3-phosphate to yield 1-deoxy-D-xylulose-5-phosphate (DXP). The chain is 1-deoxy-D-xylulose-5-phosphate synthase from Burkholderia lata (strain ATCC 17760 / DSM 23089 / LMG 22485 / NCIMB 9086 / R18194 / 383).